Reading from the N-terminus, the 278-residue chain is Lectin 6 (278 aa).

The first 23 residues, 1 to 23, serve as a signal peptide directing secretion; the sequence is MTLSSALIKIFITFLFLQNHVNS. N-linked (GlcNAc...) asparagine glycans are attached at residues Asn116, Asn139, and Asn271.

The protein belongs to the leguminous lectin family.

Functionally, may be involved in arbuscular mycorrhizal (AM) symbiosis with AM fungi. In Medicago truncatula (Barrel medic), this protein is Lectin 6.